The chain runs to 68 residues: MKPSEIREMSIEEIDAKIRELRLQLAKERGMLTMGTSLENPMVIRNLRRDIARLLTIKREKLREMRKK.

This sequence belongs to the universal ribosomal protein uL29 family.

The sequence is that of Large ribosomal subunit protein uL29 (rpl29) from Pyrococcus abyssi (strain GE5 / Orsay).